The sequence spans 234 residues: MSQVVNIKPHEKYYGVYIVELEDGSVKLATKNLVPGHRVYGERLYRWGGEEYREWNLYRSKLAGALANGLAEQPIREGHSILYLGVATGTTASHISDIVGPTGRIFSVEFAPRVMREFVLVADIRKNLYPILGDARKPKEYRHLVEMVDGIYADIAQPEQAAIVADNADYFLKDNGYLLLAIKARSIDVTKEPSEIYRREINTLKERGFEIIDVVHLEPYDKDHAMVYARYKRK.

S-adenosyl-L-methionine is bound by residues 90-91, 109-110, 134-135, and 154-157; these read TT, EF, DA, and DIAQ.

It belongs to the methyltransferase superfamily. Fibrillarin family. Interacts with nop5. Component of box C/D small ribonucleoprotein (sRNP) particles that contain rpl7ae, FlpA and nop5, plus a guide RNA.

Its function is as follows. Involved in pre-rRNA and tRNA processing. Utilizes the methyl donor S-adenosyl-L-methionine to catalyze the site-specific 2'-hydroxyl methylation of ribose moieties in rRNA and tRNA. Site specificity is provided by a guide RNA that base pairs with the substrate. Methylation occurs at a characteristic distance from the sequence involved in base pairing with the guide RNA. This is Fibrillarin-like rRNA/tRNA 2'-O-methyltransferase from Staphylothermus marinus (strain ATCC 43588 / DSM 3639 / JCM 9404 / F1).